We begin with the raw amino-acid sequence, 742 residues long: Protein-associating with the carboxyl-terminal domain of ezrin (742 aa).

G2 is lipidated: N-myristoyl glycine. The Protein kinase domain maps to 2–245; it reads GSENSALKSY…LCTLLSHDFF (244 aa). 4 HEAT repeats span residues 199–238, 285–323, 333–370, and 372–409; these read ESLL…ALCT, LIAS…HAQG, LFQS…HFTQ, and QLKK…LLGP. S439 is subject to Phosphoserine. Disordered stretches follow at residues 506–544, 568–598, and 629–652; these read LSDV…QTVN, SSWD…TSGE, and GDDA…VPSE. The segment covering 529–539 has biased composition (acidic residues); sequence WPDWSEPEEPE. The tract at residues 548-742 is interaction with EZR; that stretch reads WPREPCDDVK…GELNWEDNNW (195 aa). S707 carries the post-translational modification Phosphoserine. The disordered stretch occupies residues 723 to 742; sequence EGEAEGWEEEGELNWEDNNW.

Belongs to the protein kinase superfamily. In terms of assembly, interacts with EZR/VIL2 C-terminal domain. In terms of processing, may be myristoylated; myristoylation may target it to Golgi compartment. Phosphorylated. As to expression, ubiquitously expressed.

The protein localises to the cytoplasm. The protein resides in the golgi apparatus. It is found in the cell projection. Its subcellular location is the lamellipodium. Its function is as follows. May play a role in regulating cell adhesion/migration complexes in migrating cells. The polypeptide is Protein-associating with the carboxyl-terminal domain of ezrin (SCYL3) (Homo sapiens (Human)).